We begin with the raw amino-acid sequence, 675 residues long: DNA ligase (675 aa).

NAD(+) contacts are provided by residues 33-37 (DAEYD), 82-83 (SL), and E114. K116 serves as the catalytic N6-AMP-lysine intermediate. R137, E174, K291, and K315 together coordinate NAD(+). 4 residues coordinate Zn(2+): C409, C412, C427, and C433. Residues 595–675 (AGDNPFAGKT…EMIRLLDQSK (81 aa)) enclose the BRCT domain.

This sequence belongs to the NAD-dependent DNA ligase family. LigA subfamily. Mg(2+) serves as cofactor. The cofactor is Mn(2+).

The enzyme catalyses NAD(+) + (deoxyribonucleotide)n-3'-hydroxyl + 5'-phospho-(deoxyribonucleotide)m = (deoxyribonucleotide)n+m + AMP + beta-nicotinamide D-nucleotide.. Functionally, DNA ligase that catalyzes the formation of phosphodiester linkages between 5'-phosphoryl and 3'-hydroxyl groups in double-stranded DNA using NAD as a coenzyme and as the energy source for the reaction. It is essential for DNA replication and repair of damaged DNA. This is DNA ligase from Proteus mirabilis (strain HI4320).